We begin with the raw amino-acid sequence, 1921 residues long: Putative callose synthase 6 (1921 aa).

A disordered region spans residues 1-23 (MEASSSGTAELPRSLSRRAPSRA). The Cytoplasmic portion of the chain corresponds to 1–492 (MEASSSGTAE…FWNLFRDFDR (492 aa)). The helical transmembrane segment at 493 to 513 (MWIFLVMAFQAMVIVGWHGSG) threads the bilayer. At 514-526 (SLGDIFDKDVFKT) the chain is on the extracellular side. Residues 527–547 (VLTIFITSAYLTLLQAALDII) form a helical membrane-spanning segment. At 548 to 560 (LNFNAWKNFKFSQ) the chain is on the cytoplasmic side. Residues 561 to 581 (ILRYLLKFAVAFMWAVLLPIA) traverse the membrane as a helical segment. Residues 582–611 (YSKSVQRPTGVVKFFSTWTGDWKDQSFYTY) lie on the Extracellular side of the membrane. A helical transmembrane segment spans residues 612–632 (AVSFYVLPNILAALLFLVPPF). The Cytoplasmic portion of the chain corresponds to 633–674 (RRAMECSDMRPIKVIMWWAQPKLYVGRGMHEDMFSLFKYTTF). The chain crosses the membrane as a helical span at residues 675–695 (WIMLLISKLAFNYYVEILPLI). Topologically, residues 696–721 (TPTKMIMNLHIGHYQWHEFFPHATNN) are extracellular. Residues 722-742 (IGVVIAIWAPIVLVYLMDTQI) traverse the membrane as a helical segment. Topologically, residues 743–1484 (WYAIFSTLFG…FDFYRMLSFY (742 aa)) are cytoplasmic. A helical membrane pass occupies residues 1485–1505 (FTTIGFYFSSMLTVLTVYAFL). Residues 1506–1540 (YGRMYMVMSGLEKEILRLASPNQLEALEQALATQS) are Extracellular-facing. Residues 1541 to 1561 (IFQLGFLMVLPMVMEIGLEHG) form a helical membrane-spanning segment. Residues 1562 to 1564 (FRS) lie on the Cytoplasmic side of the membrane. The chain crosses the membrane as a helical span at residues 1565–1585 (AIVDFFIMQLQLASVFFTFQL). The Extracellular segment spans residues 1586–1628 (GTKSHYYGRTILHGGSKYRPTGRGFVVFHAKFAENYRLYSRSH). Residues 1629–1649 (FVKGLELLLLLVVYQIYGHSY) form a helical membrane-spanning segment. Over 1650 to 1655 (RSSNLY) the chain is Cytoplasmic. Residues 1656–1676 (LYITVSMWFMVGSWLFAPFIF) traverse the membrane as a helical segment. Topologically, residues 1677-1730 (NPSGFEWQKTVDDWTDWKRWLGDRGGIGIPVEKSWESWWNVEQEHLKHTSIRGR) are extracellular. The chain crosses the membrane as a helical span at residues 1731-1751 (ILEITLALRFFIYQYGIVYQL). Topologically, residues 1752-1759 (NISQRSKS) are cytoplasmic. A helical membrane pass occupies residues 1760 to 1780 (FLVYGLSWVVLLTSLLVLKMV). Residues 1781–1796 (SMGRRRFGTDFQLMFR) lie on the Extracellular side of the membrane. The helical transmembrane segment at 1797–1817 (ILKALLFLGFLSVMTILFVVF) threads the bilayer. Residues 1818–1823 (KLTLTD) are Cytoplasmic-facing. The helical transmembrane segment at 1824-1844 (LSASVLAFLPTGWAILLIGQV) threads the bilayer. At 1845 to 1867 (LRSPIKALGVWDSVKELGRAYEN) the chain is on the extracellular side. A helical membrane pass occupies residues 1868–1888 (IMGLVIFAPIAVLSWFPIVSE). Residues 1889 to 1921 (FQARLLFNQAFSRGLQISMILAGRKDKATSSHK) lie on the Cytoplasmic side of the membrane.

Belongs to the glycosyltransferase 48 family.

It localises to the cell membrane. It carries out the reaction [(1-&gt;3)-beta-D-glucosyl](n) + UDP-alpha-D-glucose = [(1-&gt;3)-beta-D-glucosyl](n+1) + UDP + H(+). Functionally, probably involved in callose synthesis, but not required for callose formation after wounding or pathogen attack. During plant growth and development, callose is found as a transitory component of the cell plate in dividing cells, is a major component of pollen mother cell walls and pollen tubes, and is found as a structural component of plasmodesmatal canals. In Arabidopsis thaliana (Mouse-ear cress), this protein is Putative callose synthase 6 (CALS6).